The sequence spans 510 residues: NAD(P)H-quinone oxidoreductase subunit 2 B, chloroplastic (510 aa).

The next 13 helical transmembrane spans lie at 24-44, 57-77, 99-119, 124-144, 149-169, 183-203, 227-247, 295-315, 323-343, 354-374, 395-415, 418-438, and 484-504; these read LLLFDGSFIFPECILIFGLIL, IPWLYFISSTSLVMSITALLF, IFQFLILLCSTLCIPLSVEYI, MAIAEFLLFVLTATLGGMFLC, LITIFVAPECFSLCSYLLSGY, YLLMGGASSSILVHGFSWLYG, PGISIALIFITVGIGFKLSPA, WHLLLEILAILSMILGNLIAI, MLAYSSIGQIGYVIIGIIVGN, YMLFYISMNLGTFACIVLFGL, ALSLAPCLLSLGGLPPLAGFF, LHLFWCGWQAGLYFLVSIGLL, and MIVCVIASTIPGISMNPIIAI.

The protein belongs to the complex I subunit 2 family. As to quaternary structure, NDH is composed of at least 16 different subunits, 5 of which are encoded in the nucleus.

The protein localises to the plastid. It is found in the chloroplast thylakoid membrane. It carries out the reaction a plastoquinone + NADH + (n+1) H(+)(in) = a plastoquinol + NAD(+) + n H(+)(out). It catalyses the reaction a plastoquinone + NADPH + (n+1) H(+)(in) = a plastoquinol + NADP(+) + n H(+)(out). NDH shuttles electrons from NAD(P)H:plastoquinone, via FMN and iron-sulfur (Fe-S) centers, to quinones in the photosynthetic chain and possibly in a chloroplast respiratory chain. The immediate electron acceptor for the enzyme in this species is believed to be plastoquinone. Couples the redox reaction to proton translocation, and thus conserves the redox energy in a proton gradient. In Gossypium barbadense (Sea Island cotton), this protein is NAD(P)H-quinone oxidoreductase subunit 2 B, chloroplastic.